Here is a 184-residue protein sequence, read N- to C-terminus: Ribosome maturation factor RimM (184 aa).

The PRC barrel domain occupies 104 to 184 (SEDEFYWREL…RIEVDWDPGF (81 aa)).

This sequence belongs to the RimM family. Binds ribosomal protein uS19.

It localises to the cytoplasm. An accessory protein needed during the final step in the assembly of 30S ribosomal subunit, possibly for assembly of the head region. Essential for efficient processing of 16S rRNA. May be needed both before and after RbfA during the maturation of 16S rRNA. It has affinity for free ribosomal 30S subunits but not for 70S ribosomes. This is Ribosome maturation factor RimM from Vibrio atlanticus (strain LGP32) (Vibrio splendidus (strain Mel32)).